A 336-amino-acid chain; its full sequence is G-protein coupled receptor homolog FPV027 (336 aa).

At 1 to 31 (MSMNNITSKMNQDSYGYFQLHMSDFTRVSLS) the chain is on the extracellular side. A glycan (N-linked (GlcNAc...) asparagine; by host) is linked at N5. A helical transmembrane segment spans residues 32 to 52 (IVFTLVFLVGIIGNAVIIWFI). Over 53-63 (GFKWTKTISTL) the chain is Cytoplasmic. Residues 64 to 84 (LFINLALADSLFLIFIPVYTV) traverse the membrane as a helical segment. Topologically, residues 85 to 101 (YVLSNFHWYLGEFLCRV) are extracellular. A disulfide bridge connects residues C99 and C178. Residues 102 to 122 (SSFFFTTNMYASMFLLTFISI) traverse the membrane as a helical segment. Residues 123–143 (DKYLTLTSHRLVYKYRKYRNY) lie on the Cytoplasmic side of the membrane. Residues 144-164 (YVCIGAIWCISIALGVPTLYY) traverse the membrane as a helical segment. Residues 165–200 (KRVILSSSRNETRCISYYGDDKHTAITIYRIIVCIR) are Extracellular-facing. Residue N174 is glycosylated (N-linked (GlcNAc...) asparagine; by host). Residues 201 to 221 (FIIGYVFPMTVILLSYALIVY) form a helical membrane-spanning segment. Over 222-240 (KVKFINKPPNRSFMITTAS) the chain is Cytoplasmic. The helical transmembrane segment at 241–261 (IFVFLACWTPHHVLNIISLYG) threads the bilayer. Residues 262–276 (LKSTSMYNYIKESIP) are Extracellular-facing. The chain crosses the membrane as a helical span at residues 277 to 297 (FVNAIAFVYSAINPIIYIFVI). Residues 298–336 (RLTSTYDSDTMDELRSALLDEETTSTEDCSDIEISDISR) lie on the Cytoplasmic side of the membrane.

This sequence belongs to the G-protein coupled receptor 1 family.

The protein localises to the host cell membrane. The chain is G-protein coupled receptor homolog FPV027 from Vertebrata (FPV).